A 322-amino-acid polypeptide reads, in one-letter code: MTQEIRTVAIVGCGVIGMGWAVLFLSRGLKVIISDPMEGAENALKGYFEQSRSYLEGFGDYDKLVSNYEFVHDIASRLAEADLIQENGPERLEFKRGLIATLDKYARPGVVIASSSSGLPSSEFIQQCKQDSTRVLIGHPFNPPHLIPLVEVVPHPGTSSESVNTALNFYRSVGKRPILLHHEVPGFVSNRLQAAINNEAYSLISRGIVSAEDLDAAVTSGPGLRWALTGPIATNALGGGGGPEGFSQRMERLGPAIRGWEDDILKHRFDWSEQRMSALQESVNKSLGAVKWDQLVEERDLVLLQLLAAKQKMASMSTPSGH.

Residues 5–25 (IRTVAIVGCGVIGMGWAVLFL) form a helical membrane-spanning segment. E151 acts as the For hydroxyacyl-coenzyme A dehydrogenase activity in catalysis.

Belongs to the 3-hydroxyacyl-CoA dehydrogenase family.

It localises to the membrane. In terms of biological role, 3-hydroxyacyl-CoA dehydrogenase; part of the Fusarium detoxification of benzoxazolinone cluster 2 (FDB2) involved in the degradation of benzoxazolinones produced by the host plant. Maize, wheat, and rye produce the 2 benzoxazinone phytoanticipins 2,4-dihy-droxy-7-methoxy-1,4-benzoxazin-3-one (DIMBOA) and 2,4-dihydroxy-1,4-benzoxazin-3-one (DIBOA) that, due to their inherent instability once released, spontaneously degrade to the more stable corresponding benzoxazolinones, 6-methoxy-2-benzoxazolinone (MBOA) and 2-benzoxazolinone (BOA), respectively. The first step in the detoxification of benzoxazolinones involves the hydrolysis of the cyclic ester bond of benzoxazolinones by the FDB1 cluster gamma-lactamase MBL1 to aminophenols. MBL1 is able to convert BOA into 2-aminophenol (2-AP), as well as MBOA into 5-methoxy-2-aminophenol (2-AMP). The FDB2 cluster N-malonyltransferase FDB2/NAT1 then metabolizes aminophenols via N-malonylation to non-toxic malonamic acids. FDB2/NAT1 converts 2-AP into N-(2-hydroxyphenyl) malonamic acid (HPMA) and 2-AMP into N-(2-hydroxy-4-methoxyphenyl) malonamic acid (HMPMA). The duplicated dienlactone hydrolases DLH1 and DLH2 may provide redundant function for hydrolyzing the lactone moiety in the BOA molecule. The roles of the amidases an other enzymes encoded by the 2 FDB clusters have not been identified so far. This Gibberella moniliformis (strain M3125 / FGSC 7600) (Maize ear and stalk rot fungus) protein is 3-hydroxyacyl-CoA dehydrogenase FVEG_12628.